Reading from the N-terminus, the 692-residue chain is Elongation factor G (692 aa).

Residues 8–283 enclose the tr-type G domain; sequence NRIRNIGIAA…AVIDYLPAPT (276 aa). GTP is bound by residues 17 to 24, 81 to 85, and 135 to 138; these read AHIDAGKT, DTPGH, and NKMD.

This sequence belongs to the TRAFAC class translation factor GTPase superfamily. Classic translation factor GTPase family. EF-G/EF-2 subfamily.

It is found in the cytoplasm. Catalyzes the GTP-dependent ribosomal translocation step during translation elongation. During this step, the ribosome changes from the pre-translocational (PRE) to the post-translocational (POST) state as the newly formed A-site-bound peptidyl-tRNA and P-site-bound deacylated tRNA move to the P and E sites, respectively. Catalyzes the coordinated movement of the two tRNA molecules, the mRNA and conformational changes in the ribosome. This chain is Elongation factor G, found in Helicobacter pylori (strain HPAG1).